The primary structure comprises 148 residues: ASCH domain-containing ribonuclease (148 aa).

One can recognise an ASCH domain in the interval 13–70; sequence SLWPEFAKAIVSGKKTVEFRRRIPLPALSARIWIYATRPVKSVIGFAYLEAIVQGDVN.

Mn(2+) is required as a cofactor. The cofactor is Ni(2+).

In terms of biological role, shows sequence-specific endoribonuclease activity towards single-stranded RNA (ssRNA), with a preference for the bond between pyrimidine and adenine nucleotides. May also have 5'-exonuclease activity. The polypeptide is ASCH domain-containing ribonuclease (Zymomonas mobilis subsp. mobilis (strain ATCC 10988 / DSM 424 / LMG 404 / NCIMB 8938 / NRRL B-806 / ZM1)).